Reading from the N-terminus, the 362-residue chain is Mortality factor 4-like protein 1 (362 aa).

The 40-residue stretch at 12-51 (QEGERVLCFHGPLLYEAKCVKVAIKDKQVKYFIHYSGWNK) folds into the Tudor-knot domain. The interval 26 to 62 (YEAKCVKVAIKDKQVKYFIHYSGWNKKSAVRPRRSEK) is interaction with KAT8. Residues 113–182 (RELQKANQEQ…RKKRARVDPT (70 aa)) are disordered. The tract at residues 133 to 266 (PGKKTSGLQQ…VAGIKEYFNV (134 aa)) is sufficient for interaction with SIN3A. The Nuclear localization signal signature appears at 135–146 (KKTSGLQQKNVE). An N6-acetyllysine modification is found at Lys143. The interaction with RB1-1 stretch occupies residues 164 to 230 (STSETPQPPR…FYLPAKKNVD (67 aa)). Residues 188–342 (TFMNRVEVKV…FLKYLAKNSA (155 aa)) form a sufficient for interaction with PHF12 region. Residues 191–362 (NRVEVKVKIP…APPEYHRKAV (172 aa)) form the MRG domain. Positions 323–344 (LALLLNYLHDFLKYLAKNSATL) are interaction with RB1-2.

In terms of assembly, component of the NuA4 histone acetyltransferase complex which contains the catalytic subunit KAT5/TIP60 and the subunits EP400, TRRAP/PAF400, BRD8/SMAP, EPC1, DMAP1/DNMAP1, RUVBL1/TIP49, RUVBL2, ING3, actin, ACTL6A/BAF53A, MORF4L1/MRG15, MORF4L2/MRGX, MRGBP, YEATS4/GAS41, VPS72/YL1 and MEAF6. The NuA4 complex interacts with MYC and the adenovirus E1A protein. MORF4L1 may also participate in the formation of NuA4 related complexes which lack the KAT5/TIP60 catalytic subunit, but which include the SWI/SNF related protein SRCAP. Component of the mSin3A histone deacetylase complex, which includes SIN3A, HDAC2, ARID4B, MORF4L1, RBBP4/RbAp48, and RBBP7/RbAp46. May also interact with PHF12 and one or more as yet undefined members of the TLE (transducin-like enhancer of split) family of transcriptional repressors. Component of the SIN3B complex, which includes SIN3B, HDAC2 or HDAC1, PHF12 and MORF4L1. Interacts with RB1 and KAT8. Interacts with the N-terminus of MRFAP1. Found in a complex composed of MORF4L1, MRFAP1 and RB1. Interacts with the entire BRCA complex, which contains BRCA1, PALB2, BRCA2 and RAD51. Interacts with PALB2. Forms a complex with MSL1 and NUPR1.

The protein resides in the nucleus. Component of the NuA4 histone acetyltransferase (HAT) complex which is involved in transcriptional activation of select genes principally by acetylation of nucleosomal histones H4 and H2A. This modification may both alter nucleosome - DNA interactions and promote interaction of the modified histones with other proteins which positively regulate transcription. This complex may be required for the activation of transcriptional programs associated with oncogene and proto-oncogene mediated growth induction, tumor suppressor mediated growth arrest and replicative senescence, apoptosis, and DNA repair. The NuA4 complex ATPase and helicase activities seem to be, at least in part, contributed by the association of RUVBL1 and RUVBL2 with EP400. NuA4 may also play a direct role in DNA repair when directly recruited to sites of DNA damage. As part of the SIN3B complex represses transcription and counteracts the histone acetyltransferase activity of EP300 through the recognition H3K27ac marks by PHF12 and the activity of the histone deacetylase HDAC2. SIN3B complex is recruited downstream of the constitutively active genes transcriptional start sites through interaction with histones and mitigates histone acetylation and RNA polymerase II progression within transcribed regions contributing to the regulation of transcription. Required for homologous recombination repair (HRR) and resistance to mitomycin C (MMC). Involved in the localization of PALB2, BRCA2 and RAD51, but not BRCA1, to DNA-damage foci. In Mus musculus (Mouse), this protein is Mortality factor 4-like protein 1 (Morf4l1).